We begin with the raw amino-acid sequence, 292 residues long: Elongation factor Ts (292 aa).

Positions 79-82 are involved in Mg(2+) ion dislocation from EF-Tu; that stretch reads TDFV.

This sequence belongs to the EF-Ts family.

It is found in the cytoplasm. In terms of biological role, associates with the EF-Tu.GDP complex and induces the exchange of GDP to GTP. It remains bound to the aminoacyl-tRNA.EF-Tu.GTP complex up to the GTP hydrolysis stage on the ribosome. This is Elongation factor Ts from Metamycoplasma arthritidis (strain 158L3-1) (Mycoplasma arthritidis).